Consider the following 346-residue polypeptide: NADH-ubiquinone oxidoreductase chain 2 (346 aa).

11 consecutive transmembrane segments (helical) span residues Pro3–Ser23, His25–Met45, Tyr59–Met79, Ile96–Pro116, Ile122–Leu142, Ile149–Gly169, Ile178–Pro198, Leu200–Ile220, Thr242–Pro262, Ser274–Met294, and Ile322–Leu342.

It belongs to the complex I subunit 2 family. In terms of assembly, core subunit of respiratory chain NADH dehydrogenase (Complex I) which is composed of 45 different subunits. Interacts with TMEM242.

The protein localises to the mitochondrion inner membrane. The catalysed reaction is a ubiquinone + NADH + 5 H(+)(in) = a ubiquinol + NAD(+) + 4 H(+)(out). Core subunit of the mitochondrial membrane respiratory chain NADH dehydrogenase (Complex I) which catalyzes electron transfer from NADH through the respiratory chain, using ubiquinone as an electron acceptor. Essential for the catalytic activity and assembly of complex I. This is NADH-ubiquinone oxidoreductase chain 2 from Equus caballus (Horse).